A 423-amino-acid chain; its full sequence is Glutamyl-tRNA reductase (423 aa).

Substrate contacts are provided by residues 49 to 52 (TCNR), S109, 114 to 116 (EGQ), and Q120. The active-site Nucleophile is the C50. Residue 189-194 (GAGETG) coordinates NADP(+).

Belongs to the glutamyl-tRNA reductase family. In terms of assembly, homodimer.

The catalysed reaction is (S)-4-amino-5-oxopentanoate + tRNA(Glu) + NADP(+) = L-glutamyl-tRNA(Glu) + NADPH + H(+). Its pathway is porphyrin-containing compound metabolism; protoporphyrin-IX biosynthesis; 5-aminolevulinate from L-glutamyl-tRNA(Glu): step 1/2. It participates in porphyrin-containing compound metabolism; chlorophyll biosynthesis. In terms of biological role, catalyzes the NADPH-dependent reduction of glutamyl-tRNA(Glu) to glutamate 1-semialdehyde (GSA). This Chlorobium limicola (strain DSM 245 / NBRC 103803 / 6330) protein is Glutamyl-tRNA reductase.